The chain runs to 399 residues: Succinate--CoA ligase [ADP-forming] subunit beta (399 aa).

Residues 9 to 254 (KAVLQPFGVS…ETEEDAKEIE (246 aa)) enclose the ATP-grasp domain. Residues K46, 53–55 (GRG), E109, S112, and E117 each bind ATP. N209 and D223 together coordinate Mg(2+). Substrate is bound by residues N274 and 331 to 333 (GIM).

It belongs to the succinate/malate CoA ligase beta subunit family. As to quaternary structure, heterotetramer of two alpha and two beta subunits. The cofactor is Mg(2+).

It catalyses the reaction succinate + ATP + CoA = succinyl-CoA + ADP + phosphate. It carries out the reaction GTP + succinate + CoA = succinyl-CoA + GDP + phosphate. It participates in carbohydrate metabolism; tricarboxylic acid cycle; succinate from succinyl-CoA (ligase route): step 1/1. In terms of biological role, succinyl-CoA synthetase functions in the citric acid cycle (TCA), coupling the hydrolysis of succinyl-CoA to the synthesis of either ATP or GTP and thus represents the only step of substrate-level phosphorylation in the TCA. The beta subunit provides nucleotide specificity of the enzyme and binds the substrate succinate, while the binding sites for coenzyme A and phosphate are found in the alpha subunit. The polypeptide is Succinate--CoA ligase [ADP-forming] subunit beta (Rhodopseudomonas palustris (strain BisB18)).